A 735-amino-acid chain; its full sequence is Translation initiation factor IF-2 (735 aa).

Composition is skewed to basic and acidic residues over residues 52 to 66 (VNSE…EKPK) and 101 to 117 (KGKE…EKKL). The interval 52-154 (VNSEKKAEKK…PAKKEKELPK (103 aa)) is disordered. Basic residues predominate over residues 121–133 (AKKKGKGPMKGKK). Positions 134–145 (QAAPASKQAQQP) are enriched in low complexity. In terms of domain architecture, tr-type G spans 236–405 (ERPPVVTIMG…LLVSEMEELK (170 aa)). Positions 245–252 (GHVDHGKT) are G1. GTP is bound at residue 245-252 (GHVDHGKT). The segment at 270–274 (GITQH) is G2. The tract at residues 291-294 (DTPG) is G3. GTP contacts are provided by residues 291-295 (DTPGH) and 345-348 (NKMD). The segment at 345 to 348 (NKMD) is G4. The interval 381–383 (SAK) is G5.

The protein belongs to the TRAFAC class translation factor GTPase superfamily. Classic translation factor GTPase family. IF-2 subfamily.

It is found in the cytoplasm. Functionally, one of the essential components for the initiation of protein synthesis. Protects formylmethionyl-tRNA from spontaneous hydrolysis and promotes its binding to the 30S ribosomal subunits. Also involved in the hydrolysis of GTP during the formation of the 70S ribosomal complex. In Geobacillus thermodenitrificans (strain NG80-2), this protein is Translation initiation factor IF-2.